The sequence spans 409 residues: MNKFLKEFKDRGFFYQCTGEENLSQLLDKEKIRAYIGFDCTAESLHVGSLLQIMCLRLLQKHGHQPIVLLGGGTTRIGDPSGKDKTRTILSEDEIEKNINNIEKILKNFLDDKDPETKPIFVNNYTWLKNLNYISFLRDVGKHFTINKMLSFDSVKIRLEREQSLSYMEFNYMILQAYDFLELNKKEKCMLQIGGSDQWGNIVNGVDLIKRYSNNHVYGLTTPLITLASGAKMGKTESGAVWLDKKFLSSYDYWQFWRNIDDRDVLKFLKIFTDINVDEIENIKDDNINELKILLANKATSMLHGEDEARKCQETAKQTFSENSLGDNLPTTQINKKMLDDNISILDLVILSKLESSKSEIRRLIKGNGIKINGQAISDEKFLITEDLFKSSLIKLSLGKKKHIKVELI.

L-tyrosine is bound at residue Y35. The short motif at 40-49 (CTAESLHVGS) is the 'HIGH' region element. 2 residues coordinate L-tyrosine: Y172 and Q176. Positions 232–236 (KMGKT) match the 'KMSKS' region motif. K235 lines the ATP pocket. In terms of domain architecture, S4 RNA-binding spans 343–409 (ISILDLVILS…KKKHIKVELI (67 aa)).

It belongs to the class-I aminoacyl-tRNA synthetase family. TyrS type 1 subfamily. In terms of assembly, homodimer.

It localises to the cytoplasm. It catalyses the reaction tRNA(Tyr) + L-tyrosine + ATP = L-tyrosyl-tRNA(Tyr) + AMP + diphosphate + H(+). Catalyzes the attachment of tyrosine to tRNA(Tyr) in a two-step reaction: tyrosine is first activated by ATP to form Tyr-AMP and then transferred to the acceptor end of tRNA(Tyr). The polypeptide is Tyrosine--tRNA ligase (Pelagibacter ubique (strain HTCC1062)).